Here is a 726-residue protein sequence, read N- to C-terminus: Biotin--protein ligase (726 aa).

The disordered stretch occupies residues 28 to 98 (EVKDQVSNKQ…SDRGGGPVEH (71 aa)). The segment covering 43-75 (PKPEPSLEIKPEQDGMEHVGRDDPKALGEEPKQ) has biased composition (basic and acidic residues). A phosphoserine mark is found at S147 and S299. One can recognise a BPL/LPL catalytic domain in the interval 463-652 (KQLGKVILFA…VLEKLIKEFQ (190 aa)).

The protein belongs to the biotin--protein ligase family. Monomer. In terms of tissue distribution, widely expressed. Mostly expressed in muscle, placenta and to a lower extent in the brain, kidney, pancreas, liver and lung.

It is found in the cytoplasm. Its subcellular location is the mitochondrion. The catalysed reaction is apo-[methylmalonyl-CoA:pyruvate carboxytransferase] + biotin + ATP = holo-[methylmalonyl-CoA:pyruvate carboxytransferase] + AMP + diphosphate + H(+). It carries out the reaction apo-[propionyl-CoA:carbon-dioxide ligase (ADP-forming)] + biotin + ATP = holo-[propionyl-CoA:carbon-dioxide ligase (ADP-forming)] + AMP + diphosphate + H(+). The enzyme catalyses apo-[3-methylcrotonoyl-CoA:carbon-dioxide ligase (ADP-forming)] + biotin + ATP = holo-[3-methylcrotonoyl-CoA:carbon-dioxide ligase (ADP-forming)] + AMP + diphosphate + H(+). It catalyses the reaction biotin + L-lysyl-[protein] + ATP = N(6)-biotinyl-L-lysyl-[protein] + AMP + diphosphate + H(+). Its function is as follows. Biotin--protein ligase catalyzing the biotinylation of the 4 biotin-dependent carboxylases acetyl-CoA-carboxylase, pyruvate carboxylase, propionyl-CoA carboxylase, and methylcrotonyl-CoA carboxylase. The chain is Biotin--protein ligase from Homo sapiens (Human).